Here is a 209-residue protein sequence, read N- to C-terminus: Imidazole glycerol phosphate synthase subunit HisH (209 aa).

Residues 4–209 (PVVVFEYGSG…RLLANWIGSL (206 aa)) enclose the Glutamine amidotransferase type-1 domain. Residue C82 is the Nucleophile of the active site. Active-site residues include H190 and E192.

In terms of assembly, heterodimer of HisH and HisF.

The protein localises to the cytoplasm. It catalyses the reaction 5-[(5-phospho-1-deoxy-D-ribulos-1-ylimino)methylamino]-1-(5-phospho-beta-D-ribosyl)imidazole-4-carboxamide + L-glutamine = D-erythro-1-(imidazol-4-yl)glycerol 3-phosphate + 5-amino-1-(5-phospho-beta-D-ribosyl)imidazole-4-carboxamide + L-glutamate + H(+). It carries out the reaction L-glutamine + H2O = L-glutamate + NH4(+). It participates in amino-acid biosynthesis; L-histidine biosynthesis; L-histidine from 5-phospho-alpha-D-ribose 1-diphosphate: step 5/9. Functionally, IGPS catalyzes the conversion of PRFAR and glutamine to IGP, AICAR and glutamate. The HisH subunit catalyzes the hydrolysis of glutamine to glutamate and ammonia as part of the synthesis of IGP and AICAR. The resulting ammonia molecule is channeled to the active site of HisF. This chain is Imidazole glycerol phosphate synthase subunit HisH, found in Leifsonia xyli subsp. xyli (strain CTCB07).